A 70-amino-acid chain; its full sequence is Exodeoxyribonuclease 7 small subunit (70 aa).

The protein belongs to the XseB family. In terms of assembly, heterooligomer composed of large and small subunits.

It localises to the cytoplasm. It carries out the reaction Exonucleolytic cleavage in either 5'- to 3'- or 3'- to 5'-direction to yield nucleoside 5'-phosphates.. Functionally, bidirectionally degrades single-stranded DNA into large acid-insoluble oligonucleotides, which are then degraded further into small acid-soluble oligonucleotides. The polypeptide is Exodeoxyribonuclease 7 small subunit (Magnetococcus marinus (strain ATCC BAA-1437 / JCM 17883 / MC-1)).